The primary structure comprises 370 residues: 4-hydroxy-3-methylbut-2-en-1-yl diphosphate synthase (flavodoxin) (370 aa).

[4Fe-4S] cluster contacts are provided by C268, C271, C303, and E310.

Belongs to the IspG family. [4Fe-4S] cluster serves as cofactor.

It catalyses the reaction (2E)-4-hydroxy-3-methylbut-2-enyl diphosphate + oxidized [flavodoxin] + H2O + 2 H(+) = 2-C-methyl-D-erythritol 2,4-cyclic diphosphate + reduced [flavodoxin]. The protein operates within isoprenoid biosynthesis; isopentenyl diphosphate biosynthesis via DXP pathway; isopentenyl diphosphate from 1-deoxy-D-xylulose 5-phosphate: step 5/6. Converts 2C-methyl-D-erythritol 2,4-cyclodiphosphate (ME-2,4cPP) into 1-hydroxy-2-methyl-2-(E)-butenyl 4-diphosphate. This chain is 4-hydroxy-3-methylbut-2-en-1-yl diphosphate synthase (flavodoxin), found in Bacillus licheniformis (strain ATCC 14580 / DSM 13 / JCM 2505 / CCUG 7422 / NBRC 12200 / NCIMB 9375 / NCTC 10341 / NRRL NRS-1264 / Gibson 46).